A 154-amino-acid polypeptide reads, in one-letter code: Myoglobin (154 aa).

The 147-residue stretch at 2–148 folds into the Globin domain; that stretch reads GLSDGEWQLV…FRNDIAAKYK (147 aa). A Phosphoserine modification is found at Ser4. His65 serves as a coordination point for nitrite. O2 is bound at residue His65. Thr68 carries the phosphothreonine modification. His94 is a heme b binding site.

The protein belongs to the globin family. In terms of assembly, monomeric.

The protein localises to the cytoplasm. It localises to the sarcoplasm. It carries out the reaction Fe(III)-heme b-[protein] + nitric oxide + H2O = Fe(II)-heme b-[protein] + nitrite + 2 H(+). The catalysed reaction is H2O2 + AH2 = A + 2 H2O. Functionally, monomeric heme protein which primary function is to store oxygen and facilitate its diffusion within muscle tissues. Reversibly binds oxygen through a pentacoordinated heme iron and enables its timely and efficient release as needed during periods of heightened demand. Depending on the oxidative conditions of tissues and cells, and in addition to its ability to bind oxygen, it also has a nitrite reductase activity whereby it regulates the production of bioactive nitric oxide. Under stress conditions, like hypoxia and anoxia, it also protects cells against reactive oxygen species thanks to its pseudoperoxidase activity. The sequence is that of Myoglobin (MB) from Ctenodactylus gundi (Northern gundi).